A 163-amino-acid chain; its full sequence is Putative pre-16S rRNA nuclease (163 aa).

Belongs to the YqgF nuclease family.

The protein resides in the cytoplasm. Could be a nuclease involved in processing of the 5'-end of pre-16S rRNA. This is Putative pre-16S rRNA nuclease from Zymomonas mobilis subsp. mobilis (strain ATCC 31821 / ZM4 / CP4).